A 483-amino-acid polypeptide reads, in one-letter code: Protein P55 (483 aa).

Residues 342–359 (LTPVMALIIILVYYSIYG) traverse the membrane as a helical segment.

The protein localises to the host membrane. This Vitis vinifera (Grape) protein is Protein P55.